The chain runs to 205 residues: CMRF35-like molecule 2 (205 aa).

The first 17 residues, 1-17 (MWLLPALLLLCLSGCLS), serve as a signal peptide directing secretion. The region spanning 18-120 (LKGPGSVTGT…VLDSWSRDPS (103 aa)) is the Ig-like V-type domain. Topologically, residues 18 to 173 (LKGPGSVTGT…NSGFRLSSPH (156 aa)) are extracellular. Cysteine 36 and cysteine 104 form a disulfide bridge. The N-linked (GlcNAc...) asparagine glycan is linked to asparagine 154. A helical transmembrane segment spans residues 174 to 194 (FLLVVLLKLPLLLSMLGAVFW). Residues 195-205 (VNRPQWAPPGR) lie on the Cytoplasmic side of the membrane.

It belongs to the CD300 family. Interacts with TYROBP. Post-translationally, N-glycosylated. Present on the surface of mature hematopoietic cells of the monocyte and myeloid lineages (at protein level).

The protein resides in the cell membrane. Probably acts as an activating receptor. This chain is CMRF35-like molecule 2 (CD300E), found in Homo sapiens (Human).